The sequence spans 354 residues: Uroporphyrinogen decarboxylase (354 aa).

Substrate contacts are provided by residues 28–32, Asp78, Tyr155, Ser210, and His325; that span reads RQAGR.

This sequence belongs to the uroporphyrinogen decarboxylase family. As to quaternary structure, homodimer.

The protein localises to the cytoplasm. It catalyses the reaction uroporphyrinogen III + 4 H(+) = coproporphyrinogen III + 4 CO2. The protein operates within porphyrin-containing compound metabolism; protoporphyrin-IX biosynthesis; coproporphyrinogen-III from 5-aminolevulinate: step 4/4. In terms of biological role, catalyzes the decarboxylation of four acetate groups of uroporphyrinogen-III to yield coproporphyrinogen-III. This is Uroporphyrinogen decarboxylase from Trichodesmium erythraeum (strain IMS101).